The following is a 102-amino-acid chain: Large ribosomal subunit protein eL21 (102 aa).

A compositionally biased stretch (basic residues) spans 1-21 (MVRRSKGFRSRTRKKLRKKPR). Residues 1-33 (MVRRSKGFRSRTRKKLRKKPRERGLSPLGPMTQ) are disordered.

Belongs to the eukaryotic ribosomal protein eL21 family.

This is Large ribosomal subunit protein eL21 from Methanopyrus kandleri (strain AV19 / DSM 6324 / JCM 9639 / NBRC 100938).